Reading from the N-terminus, the 340-residue chain is Selenide, water dikinase (340 aa).

Sec-17 is an active-site residue. Position 17 (Sec-17) is a non-standard amino acid, selenocysteine. Residues Lys-20 and 45-47 (NNE) contribute to the ATP site. Residue Asp-48 coordinates Mg(2+). ATP-binding positions include Asp-65, Asp-88, and 136–138 (GHT). Residue Asp-88 coordinates Mg(2+). A Mg(2+)-binding site is contributed by Asp-224.

Belongs to the selenophosphate synthase 1 family. Class I subfamily. Homodimer. The cofactor is Mg(2+).

It carries out the reaction hydrogenselenide + ATP + H2O = selenophosphate + AMP + phosphate + 2 H(+). Synthesizes selenophosphate from selenide and ATP. This is Selenide, water dikinase from Campylobacter jejuni subsp. jejuni serotype O:2 (strain ATCC 700819 / NCTC 11168).